Consider the following 457-residue polypeptide: Cation efflux system protein CusC (457 aa).

Positions 1–17 (MSPCKLLPFCVALALTG) are cleaved as a signal peptide. Cys18 carries N-palmitoyl cysteine lipidation. Cys18 carries S-diacylglycerol cysteine lipidation.

This sequence belongs to the outer membrane factor (OMF) (TC 1.B.17) family. In terms of assembly, homotrimer. Component of the cus efflux system composed of CusA, CusB, CusC and CusF.

The protein localises to the cell outer membrane. In terms of biological role, forms pores that allow passive diffusion of cations across the outer membrane. Part of a cation efflux system that mediates resistance to copper and silver. In pathogenic strains it allows the bacteria to invade brain microvascular endothelial cells (BMEC) thus allowing it to cross the blood-brain barrier and cause neonatal meningitis. The sequence is that of Cation efflux system protein CusC (cusC) from Escherichia coli (strain K12).